A 117-amino-acid polypeptide reads, in one-letter code: Ribonuclease P protein component 4 (117 aa).

Zn(2+)-binding residues include cysteine 63, cysteine 66, cysteine 92, and cysteine 95.

Belongs to the eukaryotic/archaeal RNase P protein component 4 family. Consists of a catalytic RNA component and at least 4 protein subunits. Forms a subcomplex with Rnp1 which stimulates the catalytic RNA. It depends on Zn(2+) as a cofactor.

It is found in the cytoplasm. The enzyme catalyses Endonucleolytic cleavage of RNA, removing 5'-extranucleotides from tRNA precursor.. Part of ribonuclease P, a protein complex that generates mature tRNA molecules by cleaving their 5'-ends. The RNA is catalytic, but its KM for pre-tRNA is 170-fold decreased in the presence of the 4 known protein subunits (Rnp1-4). The protein subunits also decrease the amount of Mg(2+) needed for activity. This chain is Ribonuclease P protein component 4, found in Pyrococcus furiosus (strain ATCC 43587 / DSM 3638 / JCM 8422 / Vc1).